Here is a 246-residue protein sequence, read N- to C-terminus: tRNA pseudouridine synthase A (246 aa).

Asp-52 serves as the catalytic Nucleophile. Substrate is bound at residue Tyr-111.

Belongs to the tRNA pseudouridine synthase TruA family. In terms of assembly, homodimer.

The enzyme catalyses uridine(38/39/40) in tRNA = pseudouridine(38/39/40) in tRNA. Formation of pseudouridine at positions 38, 39 and 40 in the anticodon stem and loop of transfer RNAs. The polypeptide is tRNA pseudouridine synthase A (Borreliella burgdorferi (strain ZS7) (Borrelia burgdorferi)).